The following is an 88-amino-acid chain: UPF0297 protein Bcer98_3100 (88 aa).

The protein belongs to the UPF0297 family.

The chain is UPF0297 protein Bcer98_3100 from Bacillus cytotoxicus (strain DSM 22905 / CIP 110041 / 391-98 / NVH 391-98).